The primary structure comprises 316 residues: 4-hydroxy-3-methylbut-2-enyl diphosphate reductase (316 aa).

A [4Fe-4S] cluster-binding site is contributed by C12. 2 residues coordinate (2E)-4-hydroxy-3-methylbut-2-enyl diphosphate: H41 and H74. H41 and H74 together coordinate dimethylallyl diphosphate. H41 and H74 together coordinate isopentenyl diphosphate. C96 is a binding site for [4Fe-4S] cluster. Residue H124 coordinates (2E)-4-hydroxy-3-methylbut-2-enyl diphosphate. H124 lines the dimethylallyl diphosphate pocket. Position 124 (H124) interacts with isopentenyl diphosphate. E126 functions as the Proton donor in the catalytic mechanism. (2E)-4-hydroxy-3-methylbut-2-enyl diphosphate is bound at residue T167. C197 lines the [4Fe-4S] cluster pocket. Positions 225, 226, 227, and 269 each coordinate (2E)-4-hydroxy-3-methylbut-2-enyl diphosphate. Dimethylallyl diphosphate contacts are provided by S225, S226, N227, and S269. Positions 225, 226, 227, and 269 each coordinate isopentenyl diphosphate.

Belongs to the IspH family. As to quaternary structure, homodimer. Requires [4Fe-4S] cluster as cofactor.

The enzyme catalyses isopentenyl diphosphate + 2 oxidized [2Fe-2S]-[ferredoxin] + H2O = (2E)-4-hydroxy-3-methylbut-2-enyl diphosphate + 2 reduced [2Fe-2S]-[ferredoxin] + 2 H(+). It carries out the reaction dimethylallyl diphosphate + 2 oxidized [2Fe-2S]-[ferredoxin] + H2O = (2E)-4-hydroxy-3-methylbut-2-enyl diphosphate + 2 reduced [2Fe-2S]-[ferredoxin] + 2 H(+). It participates in isoprenoid biosynthesis; dimethylallyl diphosphate biosynthesis; dimethylallyl diphosphate from (2E)-4-hydroxy-3-methylbutenyl diphosphate: step 1/1. It functions in the pathway isoprenoid biosynthesis; isopentenyl diphosphate biosynthesis via DXP pathway; isopentenyl diphosphate from 1-deoxy-D-xylulose 5-phosphate: step 6/6. In terms of biological role, catalyzes the conversion of 1-hydroxy-2-methyl-2-(E)-butenyl 4-diphosphate (HMBPP) into a mixture of isopentenyl diphosphate (IPP) and dimethylallyl diphosphate (DMAPP). Acts in the terminal step of the DOXP/MEP pathway for isoprenoid precursor biosynthesis. The sequence is that of 4-hydroxy-3-methylbut-2-enyl diphosphate reductase from Salmonella paratyphi C (strain RKS4594).